The following is a 1441-amino-acid chain: Tripeptidyl-peptidase 2 (1441 aa).

The tract at residues Ala-62–Ala-89 is disordered. Residues Thr-75–Glu-85 show a composition bias toward basic and acidic residues. The region spanning Glu-107–Phe-608 is the Peptidase S8 domain. Catalysis depends on charge relay system residues Asp-131, His-359, and Ser-549. The span at Thr-1139–Thr-1155 shows a compositional bias: low complexity. Disordered stretches follow at residues Thr-1139 to Ala-1190 and Gln-1255 to Lys-1274. Ser-1182 is subject to Phosphoserine. Residues Ser-1265 to Lys-1274 are compositionally biased toward basic and acidic residues.

It belongs to the peptidase S8 family. Homooligomer; forms a complex of 6 MDa probably composed of 40 subunits. Forms a structure consisting of 2 segmented and twisted strands that form a spindle-shaped structure. Each strand is composed of 10 segments (a segment being a homodimer oriented head to head), stacking of these segments leads to the formation of a twisted single strand. 2 strands compose the fully assembled spindle.

The protein resides in the cytoplasm. It carries out the reaction Release of an N-terminal tripeptide from a polypeptide.. Inhibited by phenylmethanesulfonyl fluoride (PMSF) and butabindide, but not by peptidase inhibitor pepstatin, EDTA, nor bestatin. In terms of biological role, component of the proteolytic cascade acting downstream of the 26S proteasome in the ubiquitin-proteasome pathway. Efficiently cleaves Ala-Ala-Ala-polypeptide and Pro-Pro-Ala-polypeptide, Val-Leu-Lys-polypeptide only at high concentration. Does not cleave Ala-Phe-Pro-polypeptide nor Pro-Leu-Gly-polypeptide. The protein is Tripeptidyl-peptidase 2 (TppII) of Drosophila melanogaster (Fruit fly).